The following is a 389-amino-acid chain: Oxytocin receptor (389 aa).

A disordered region spans residues 1 to 27 (MEGELAANWSTEAVNSSAAPPGAEGNC). At 1-38 (MEGELAANWSTEAVNSSAAPPGAEGNCTAGPPRRNEAL) the chain is on the extracellular side. Residues N8, N15, and N26 are each glycosylated (N-linked (GlcNAc...) asparagine). Residues 8–18 (NWSTEAVNSSA) show a composition bias toward polar residues. A helical transmembrane segment spans residues 39–63 (ARVEVAVLCLILFLALSGNACVLLA). Topologically, residues 64 to 74 (LRTTRHKHSRL) are cytoplasmic. The chain crosses the membrane as a helical span at residues 75 to 97 (FFFMKHLSIADLVVAVFQVLPQL). Residues 98–113 (LWDITFRFYGPDLLCR) are Extracellular-facing. An intrachain disulfide couples C112 to C187. A helical membrane pass occupies residues 114 to 135 (LVKYLQVVGMFASTYLLLLMSL). Over 136–154 (DRCLAICQPLRSLRRRTDR) the chain is Cytoplasmic. The helical transmembrane segment at 155-175 (LAVLATWLGCLVASAPQVHIF) threads the bilayer. Over 176-202 (SLREVADGVFDCWAVFIQPWGPKAYIT) the chain is Extracellular. The chain crosses the membrane as a helical span at residues 203 to 225 (WITLAVYIVPVIVLAACYGLISF). Topologically, residues 226–275 (KIWQNLRLKTAAAAAAEAPEGAAAGDGGRMALARVSSVKLISKAKIRTVK) are cytoplasmic. A helical membrane pass occupies residues 276-294 (MTFIIVLAFIVCWTPFFFV). Over 295 to 309 (QMWSVWDANAPKEAS) the chain is Extracellular. The helical transmembrane segment at 310–332 (AFIIVMLLASLNSCCNPWIYMLF) threads the bilayer. Over 333–389 (TGHLFHELVQRFLCCSASYLKGNRLGETSTSKKSNSSSFVLSHRSSSQRSCSQPSTA) the chain is Cytoplasmic. The segment at 358–389 (GETSTSKKSNSSSFVLSHRSSSQRSCSQPSTA) is disordered. Residues 360–389 (TSTSKKSNSSSFVLSHRSSSQRSCSQPSTA) are compositionally biased toward low complexity. Phosphoserine is present on residues S366 and S368.

It belongs to the G-protein coupled receptor 1 family. Vasopressin/oxytocin receptor subfamily.

Its subcellular location is the cell membrane. In terms of biological role, receptor for oxytocin. The activity of this receptor is mediated by G proteins which activate a phosphatidylinositol-calcium second messenger system. This is Oxytocin receptor (OXTR) from Macaca mulatta (Rhesus macaque).